We begin with the raw amino-acid sequence, 358 residues long: Biotin synthase (358 aa).

The region spanning 55–278 (NKVRIHILDN…VNPDSEIRIA (224 aa)) is the Radical SAM core domain. Residues Cys-70, Cys-74, and Cys-77 each contribute to the [4Fe-4S] cluster site. The [2Fe-2S] cluster site is built by Cys-114, Cys-146, Cys-206, and Arg-276.

This sequence belongs to the radical SAM superfamily. Biotin synthase family. Homodimer. [4Fe-4S] cluster is required as a cofactor. The cofactor is [2Fe-2S] cluster.

It catalyses the reaction (4R,5S)-dethiobiotin + (sulfur carrier)-SH + 2 reduced [2Fe-2S]-[ferredoxin] + 2 S-adenosyl-L-methionine = (sulfur carrier)-H + biotin + 2 5'-deoxyadenosine + 2 L-methionine + 2 oxidized [2Fe-2S]-[ferredoxin]. Its pathway is cofactor biosynthesis; biotin biosynthesis; biotin from 7,8-diaminononanoate: step 2/2. Functionally, catalyzes the conversion of dethiobiotin (DTB) to biotin by the insertion of a sulfur atom into dethiobiotin via a radical-based mechanism. This is Biotin synthase from Leptospira borgpetersenii serovar Hardjo-bovis (strain JB197).